Reading from the N-terminus, the 397-residue chain is Odorant receptor 59a (397 aa).

Residues 1 to 36 lie on the Cytoplasmic side of the membrane; sequence MAEVRVDSLEFFKSHWTAWRYLGVAHFRVENWKNLY. A helical transmembrane segment spans residues 37 to 57; that stretch reads VFYSIVSNLLVTLCYPVHLGI. Residues 58–68 are Extracellular-facing; that stretch reads SLFRNRTITED. An N-linked (GlcNAc...) asparagine glycan is attached at asparagine 62. A helical membrane pass occupies residues 69–92; that stretch reads ILNLTTFATCTACSVKCLLYAYNI. Residues 93–128 lie on the Cytoplasmic side of the membrane; the sequence is KDVLEMERLLRLLDERVVGPEQRSIYGQVRVQLRNV. A helical membrane pass occupies residues 129–149; it reads LYVFIGIYMPCALFAELSFLF. Residues 150 to 179 are Extracellular-facing; sequence KEERGLMYPAWFPFDWLHSTRNYYIANAYQ. Residues 180–200 form a helical membrane-spanning segment; the sequence is IVGISFQLLQNYVSDCFPAVV. Residues 201 to 274 lie on the Cytoplasmic side of the membrane; sequence LCLISSHIKM…IEAFISLPML (74 aa). The chain crosses the membrane as a helical span at residues 275 to 295; it reads IQFTVTALNVCIGLAALVFFV. At 296 to 301 the chain is on the extracellular side; it reads SEPMAR. A helical transmembrane segment spans residues 302-322; it reads MYFIFYSLAMPLQIFPSCFFG. The Cytoplasmic segment spans residues 323–372; sequence TDNEYWFGRLHYAAFSCNWHTQNRSFKRKMMLFVEQSLKKSTAVAGGMMR. Residues 373-393 traverse the membrane as a helical segment; sequence IHLDTFFSTLKGAYSLFTIII. Over 394 to 397 the chain is Extracellular; it reads RMRK.

Belongs to the insect chemoreceptor superfamily. Heteromeric odorant receptor channel (TC 1.A.69) family. Or2a subfamily. As to quaternary structure, interacts with Orco. Complexes exist early in the endomembrane system in olfactory sensory neurons (OSNs), coupling these complexes to the conserved ciliary trafficking pathway. Expressed in neurons of the third antennal segment.

The protein localises to the cell membrane. Its function is as follows. Odorant receptor which mediates acceptance or avoidance behavior, depending on its substrates. The odorant receptor repertoire encodes a large collection of odor stimuli that vary widely in identity, intensity, and duration. May form a complex with Orco to form odorant-sensing units, providing sensitive and prolonged odorant signaling and calcium permeability. Involved in the behavioral responses to ethyl acetate, anisole, hexanoic acid, and pyrazines. The chain is Odorant receptor 59a (Or59a) from Drosophila melanogaster (Fruit fly).